Reading from the N-terminus, the 369-residue chain is IST1-like protein (369 aa).

Positions 12–59 form a coiled coil; that stretch reads KLKVQLKLAVSRIQILKNKKANIVRDEKRNVAELLRKKNEESARIRVE. The segment at 224–354 is disordered; the sequence is QIIQQQQQPQ…SSDTGYPDYD (131 aa). 2 stretches are compositionally biased toward low complexity: residues 225–239 and 246–270; these read IIQQQQQPQMPSFPI and PTFSQIQHQQQIQQQYQQQQQSPQF. A compositionally biased stretch (polar residues) spans 277–305; sequence FYNNNSGNQTPQFPTISTNNSDGYSNDKF. Residues 306-337 are compositionally biased toward low complexity; it reads NNGNNNYNNNNNNNNNNNNNNNHNNNNNNNNN.

This sequence belongs to the IST1 family.

The chain is IST1-like protein from Dictyostelium discoideum (Social amoeba).